Here is a 211-residue protein sequence, read N- to C-terminus: 3-demethoxyubiquinol 3-hydroxylase (211 aa).

Fe cation is bound by residues Glu-60, Glu-90, His-93, Glu-142, Glu-174, and His-177.

The protein belongs to the COQ7 family. Fe cation is required as a cofactor.

It is found in the cell membrane. It catalyses the reaction a 5-methoxy-2-methyl-3-(all-trans-polyprenyl)benzene-1,4-diol + AH2 + O2 = a 3-demethylubiquinol + A + H2O. The protein operates within cofactor biosynthesis; ubiquinone biosynthesis. Catalyzes the hydroxylation of 2-nonaprenyl-3-methyl-6-methoxy-1,4-benzoquinol during ubiquinone biosynthesis. This is 3-demethoxyubiquinol 3-hydroxylase from Francisella tularensis subsp. holarctica (strain FTNF002-00 / FTA).